A 442-amino-acid polypeptide reads, in one-letter code: Exodeoxyribonuclease 7 large subunit (442 aa).

The protein belongs to the XseA family. In terms of assembly, heterooligomer composed of large and small subunits.

Its subcellular location is the cytoplasm. The catalysed reaction is Exonucleolytic cleavage in either 5'- to 3'- or 3'- to 5'-direction to yield nucleoside 5'-phosphates.. Bidirectionally degrades single-stranded DNA into large acid-insoluble oligonucleotides, which are then degraded further into small acid-soluble oligonucleotides. In Shewanella woodyi (strain ATCC 51908 / MS32), this protein is Exodeoxyribonuclease 7 large subunit.